We begin with the raw amino-acid sequence, 252 residues long: MQIVAIIPARYGSTRFPGKALADLAGKPMIQHVYEQTIRASLVSRAIVATDDRRIADVIHQIGGEAIMTSTDHETGTDRLAEVARGLDADIIVNVQGDEPLIDPAMINQAIEPFLGNPGLKMGTLKSRVKCLHDFLSPNVVKVVTDNNGYALYFSRSPLPFFRDKWQDLKDEAFASGRLLCFKHVGLYVYQRNFLLEYAAMPQTFLELSEKLEQLRALENGIRIRVVETEFESLGVDTPDDLNKAKERMKQG.

Belongs to the KdsB family.

The protein resides in the cytoplasm. It catalyses the reaction 3-deoxy-alpha-D-manno-oct-2-ulosonate + CTP = CMP-3-deoxy-beta-D-manno-octulosonate + diphosphate. It participates in nucleotide-sugar biosynthesis; CMP-3-deoxy-D-manno-octulosonate biosynthesis; CMP-3-deoxy-D-manno-octulosonate from 3-deoxy-D-manno-octulosonate and CTP: step 1/1. The protein operates within bacterial outer membrane biogenesis; lipopolysaccharide biosynthesis. Activates KDO (a required 8-carbon sugar) for incorporation into bacterial lipopolysaccharide in Gram-negative bacteria. This is 3-deoxy-manno-octulosonate cytidylyltransferase from Trichlorobacter lovleyi (strain ATCC BAA-1151 / DSM 17278 / SZ) (Geobacter lovleyi).